A 682-amino-acid polypeptide reads, in one-letter code: Methionine--tRNA ligase (682 aa).

The short motif at 15-25 is the 'HIGH' region element; sequence PYANGAIHLGH. Zn(2+) contacts are provided by Cys146, Cys149, Cys159, and Cys162. Positions 331–335 match the 'KMSKS' region motif; that stretch reads KMSKS. Lys334 provides a ligand contact to ATP. In terms of domain architecture, tRNA-binding spans 580–682; that stretch reads DFAKLDMRVA…NGVTAGMQVK (103 aa).

This sequence belongs to the class-I aminoacyl-tRNA synthetase family. MetG type 1 subfamily. Homodimer. Zn(2+) serves as cofactor.

It localises to the cytoplasm. It catalyses the reaction tRNA(Met) + L-methionine + ATP = L-methionyl-tRNA(Met) + AMP + diphosphate. Is required not only for elongation of protein synthesis but also for the initiation of all mRNA translation through initiator tRNA(fMet) aminoacylation. The polypeptide is Methionine--tRNA ligase (Haemophilus influenzae (strain PittGG)).